A 602-amino-acid chain; its full sequence is Elongation factor 4 (602 aa).

The tr-type G domain occupies 7 to 189 (RNIRNFSIIA…AIVQRIPAPQ (183 aa)). GTP-binding positions include 19–24 (DHGKST) and 136–139 (NKID).

The protein belongs to the TRAFAC class translation factor GTPase superfamily. Classic translation factor GTPase family. LepA subfamily.

It is found in the cell inner membrane. The catalysed reaction is GTP + H2O = GDP + phosphate + H(+). In terms of biological role, required for accurate and efficient protein synthesis under certain stress conditions. May act as a fidelity factor of the translation reaction, by catalyzing a one-codon backward translocation of tRNAs on improperly translocated ribosomes. Back-translocation proceeds from a post-translocation (POST) complex to a pre-translocation (PRE) complex, thus giving elongation factor G a second chance to translocate the tRNAs correctly. Binds to ribosomes in a GTP-dependent manner. The sequence is that of Elongation factor 4 from Xylella fastidiosa (strain M23).